The primary structure comprises 545 residues: Myotubularin-related protein 9 (545 aa).

Position 1 is an N-acetylmethionine (M1). The GRAM domain occupies 4-99 (AELIKTPRVD…LNIASSIEAL (96 aa)). The Myotubularin phosphatase domain maps to 123-498 (GWHSFLPEQE…QSLQLWEGIF (376 aa)). A coiled-coil region spans residues 508–542 (LDEAYEEMVNIIEYNKELQAKVNVLRRQLAELETE).

Belongs to the protein-tyrosine phosphatase family. Non-receptor class myotubularin subfamily. As to quaternary structure, homodimer. Heterodimer (via C-terminus) with lipid phosphatase MTMR6 (via C-terminus). Heterodimer (via coiled coil domain) with lipid phosphatase MTMR7 (via C-terminus).

The protein localises to the cytoplasm. It is found in the cell projection. The protein resides in the ruffle membrane. Its subcellular location is the perinuclear region. It localises to the endoplasmic reticulum. Acts as an adapter for myotubularin-related phosphatases. Increases lipid phosphatase MTMR6 catalytic activity, specifically towards phosphatidylinositol 3,5-bisphosphate, and MTMR6 binding affinity for phosphorylated phosphatidylinositols. Positively regulates lipid phosphatase MTMR7 catalytic activity. The formation of the MTMR6-MTMR9 complex, stabilizes both MTMR6 and MTMR9 protein levels. Plays a role in the late stages of macropinocytosis possibly by regulating MTMR6-mediated dephosphorylation of phosphatidylinositol 3-phosphate in membrane ruffles. Negatively regulates DNA damage-induced apoptosis, in part via its association with MTMR6. Does not bind mono-, di- and tri-phosphorylated phosphatidylinositols, phosphatidic acid and phosphatidylserine. The polypeptide is Myotubularin-related protein 9 (Mtmr9) (Mus musculus (Mouse)).